Here is a 407-residue protein sequence, read N- to C-terminus: Peptidase T (407 aa).

His77 serves as a coordination point for Zn(2+). The active site involves Asp79. Residue Asp138 participates in Zn(2+) binding. Glu172 (proton acceptor) is an active-site residue. Zn(2+) contacts are provided by Glu173, Asp195, and His377.

The protein belongs to the peptidase M20B family. Zn(2+) serves as cofactor.

It is found in the cytoplasm. The enzyme catalyses Release of the N-terminal residue from a tripeptide.. In terms of biological role, cleaves the N-terminal amino acid of tripeptides. This chain is Peptidase T, found in Aeromonas hydrophila subsp. hydrophila (strain ATCC 7966 / DSM 30187 / BCRC 13018 / CCUG 14551 / JCM 1027 / KCTC 2358 / NCIMB 9240 / NCTC 8049).